Consider the following 303-residue polypeptide: Methionyl-tRNA formyltransferase (303 aa).

111–114 (SLLP) lines the (6S)-5,6,7,8-tetrahydrofolate pocket.

This sequence belongs to the Fmt family.

The enzyme catalyses L-methionyl-tRNA(fMet) + (6R)-10-formyltetrahydrofolate = N-formyl-L-methionyl-tRNA(fMet) + (6S)-5,6,7,8-tetrahydrofolate + H(+). Functionally, attaches a formyl group to the free amino group of methionyl-tRNA(fMet). The formyl group appears to play a dual role in the initiator identity of N-formylmethionyl-tRNA by promoting its recognition by IF2 and preventing the misappropriation of this tRNA by the elongation apparatus. The chain is Methionyl-tRNA formyltransferase from Ehrlichia chaffeensis (strain ATCC CRL-10679 / Arkansas).